A 384-amino-acid chain; its full sequence is Sensor protein VanS (384 aa).

A run of 2 helical transmembrane segments spans residues 21–41 (MYIV…RSMI) and 76–96 (IDIF…RVML). Residues 161 to 376 (YLAHDIKTPL…TFRVELPAMP (216 aa)) enclose the Histidine kinase domain. The residue at position 164 (His-164) is a Phosphohistidine; by autocatalysis. The involved in low-affinity ATP-binding. Exhibits higher affinity for ATP than GTP stretch occupies residues 221–384 (QTITLTKTHI…MPDLVDKRRS (164 aa)).

Autophosphorylated.

The protein resides in the membrane. It catalyses the reaction ATP + protein L-histidine = ADP + protein N-phospho-L-histidine.. With respect to regulation, phosphorylation of VanR inhibited by EDTA. Its function is as follows. Member of the two-component regulatory system VanS/VanR. Functions as a sensor protein kinase which is autophosphorylated at a histidine residue in response to environmental stimuli, such as glycopeptide antibiotics. VanS transfers its phosphate group to transcriptional regulatory protein VanR, thereby modulating expression of target genes. Binds directly to, and autophosphorylation activity is enhanced by, the glycopeptides vancomycin and teicoplanin, in vitro. However it has also been reported that autophosphorylation, phosphate transfer to VanR and dephosphorylation of phospho-VanR are all unaffected by the presence of vancomycin, in vitro. In the absence of vancomycin, negatively regulates VanR-mediated activation of vanS, vanH, vanA and vanX, probably as a result of dephosphorylating phospho-VanR. May inhibit promoter-specific DNA binding by VanR. Involved in conferring vancomycin resistance. This is Sensor protein VanS from Enterococcus faecium (Streptococcus faecium).